We begin with the raw amino-acid sequence, 208 residues long: Ribosomal RNA large subunit methyltransferase E (208 aa).

S-adenosyl-L-methionine-binding residues include glycine 61, tryptophan 63, aspartate 81, aspartate 97, and aspartate 122. Catalysis depends on lysine 162, which acts as the Proton acceptor.

It belongs to the class I-like SAM-binding methyltransferase superfamily. RNA methyltransferase RlmE family.

The protein resides in the cytoplasm. It catalyses the reaction uridine(2552) in 23S rRNA + S-adenosyl-L-methionine = 2'-O-methyluridine(2552) in 23S rRNA + S-adenosyl-L-homocysteine + H(+). In terms of biological role, specifically methylates the uridine in position 2552 of 23S rRNA at the 2'-O position of the ribose in the fully assembled 50S ribosomal subunit. The chain is Ribosomal RNA large subunit methyltransferase E from Pseudomonas putida (strain W619).